The following is a 657-amino-acid chain: Pentatricopeptide repeat-containing protein At5g44230 (657 aa).

PPR repeat units follow at residues 45-79 (KELLVSSLISKLDDCINLNQIKQIHGHVLRKGLDQ), 80-112 (SCYILTKLIRTLTKLGVPMDPYARRVIEPVQFR), 113-147 (NPFLWTAVIRGYAIEGKFDEAIAMYGCMRKEEITP), 148-178 (VSFTFSALLKACGTMKDLNLGRQFHAQTFRL), 183-213 (FVYVGNTMIDMYVKCESIDCARKVFDEMPER), 214-244 (DVISWTELIAAYARVGNMECAAELFESLPTK), 245-279 (DMVAWTAMVTGFAQNAKPQEALEYFDRMEKSGIRA), 280-314 (DEVTVAGYISACAQLGASKYADRAVQIAQKSGYSP), 317-347 (HVVIGSALIDMYSKCGNVEEAVNVFMSMNNK), 348-383 (NVFTYSSMILGLATHGRAQEALHLFHYMVTQTEIKP), 384-419 (NTVTFVGALMACSHSGLVDQGRQVFDSMYQTFGVQP), and 420-450 (TRDHYTCMVDLLGRTGRLQEALELIKTMSVE). A type E motif region spans residues 455–530 (VWGALLGACR…TPAVSWVVDK (76 aa)). Residues 532-562 (GQMHKFFPGNLNHPMSNKIQDKLEELVERLT) form a type E(+) motif region. Residues 563-657 (VLGYQPDLSS…SGDCSCGDFW (95 aa)) are type DYW motif.

It belongs to the PPR family. PCMP-H subfamily.

The protein is Pentatricopeptide repeat-containing protein At5g44230 (PCMP-H17) of Arabidopsis thaliana (Mouse-ear cress).